The sequence spans 390 residues: Guanine nucleotide exchange factor for Rab-3A (390 aa).

The disordered stretch occupies residues 1–60 (MWSGQPHPDEGHPPPLEAVPVPWKSVGPCKSHRESLGGLPETPAGEEAQGEEGPAATQLD). Over residues 40 to 58 (PETPAGEEAQGEEGPAATQ) the composition is skewed to low complexity. Residues 73-161 (EKGSEFLKEE…AEVTALKTLV (89 aa)) are a coiled coil. The disordered stretch occupies residues 166 to 194 (PASPNRELHPQLLSPTKAGPRKGHLRHKS). Residues S168 and S179 each carry the phosphoserine modification. Residues 184–194 (GPRKGHLRHKS) show a composition bias toward basic residues.

The protein belongs to the SEC2 family. In terms of assembly, interacts with RAB3A and IHPK1 through the coiled-coil domain. This interaction is competitive. IHPK1 kinase activity is not required for this interaction.

In terms of biological role, guanine nucleotide exchange factor (GEF) which may activate RAB3A, a GTPase that regulates synaptic vesicle exocytosis. Promotes the exchange of GDP to GTP, converting inactive GDP-bound Rab proteins into their active GTP-bound form. May also activate RAB8A and RAB8B. This Bos taurus (Bovine) protein is Guanine nucleotide exchange factor for Rab-3A (RAB3IL1).